A 213-amino-acid chain; its full sequence is Pyrrolidone-carboxylate peptidase (213 aa).

Active-site residues include glutamate 78, cysteine 141, and histidine 165.

This sequence belongs to the peptidase C15 family. As to quaternary structure, homotetramer.

Its subcellular location is the cytoplasm. It carries out the reaction Release of an N-terminal pyroglutamyl group from a polypeptide, the second amino acid generally not being Pro.. Functionally, removes 5-oxoproline from various penultimate amino acid residues except L-proline. The protein is Pyrrolidone-carboxylate peptidase of Clostridium perfringens (strain 13 / Type A).